A 262-amino-acid polypeptide reads, in one-letter code: MNILVVKTPEELAEAGYKLIEEVVKTKENPTLGMATGSSPLGIYAEMRKNKLDTSRVTTVNLDEYVNLPHEDKNSYHYFMQEQLFDHLPFKQTYVPNGMASDLEEECKRYEGILAANPVDLQILGIGENGHIGFNEPGTPFNSPTNIVELTESTRQANLRFFEKEEDVPTHAITMGIGSIMKAKQILLVAMGSKKAEAVKELLQGAYSEACPATVLQRHPNVTVIADQEALSLCSEAIADEHRQVFTISDLLSDSRVGETAN.

Catalysis depends on D63, which acts as the Proton acceptor; for enolization step. The For ring-opening step role is filled by N129. The active-site Proton acceptor; for ring-opening step is the H131. E136 acts as the For ring-opening step in catalysis.

The protein belongs to the glucosamine/galactosamine-6-phosphate isomerase family. NagB subfamily.

The catalysed reaction is alpha-D-glucosamine 6-phosphate + H2O = beta-D-fructose 6-phosphate + NH4(+). It participates in amino-sugar metabolism; N-acetylneuraminate degradation; D-fructose 6-phosphate from N-acetylneuraminate: step 5/5. In terms of biological role, catalyzes the reversible isomerization-deamination of glucosamine 6-phosphate (GlcN6P) to form fructose 6-phosphate (Fru6P) and ammonium ion. This chain is Glucosamine-6-phosphate deaminase, found in Bacillus cereus (strain ZK / E33L).